Consider the following 520-residue polypeptide: MTETAHDRLLIIDFGSQVTQLIARRLRELNVYCEIHPYQNVTMDFVREFAPKAVIFSGGPDSVTREGSPRAPQEIFDYGVPILGICYGQQVMMHQLGGTVQSGHGTAEFGRAYVTPTEERIDMLSGWFLDQTEQVWMSHGDHVSEIAPGFKVYGTSPNAPFAITADLERNFYAVQFHPEVHHTPNGKTLYENFVRLAGFSGDWTMGAYREQMVETIREQVGDKKVICALSGGVDSSVAAALIHEAIGDQLTCVFVDHGLLRKNEAEEVVGMFRDHMNLQVIHADETELFLGELEGQSDPETKRKIIGKLFIDVFQKYADQIEGAEFLAQGTLYPDVIESVSFSGGPSVTIKSHHNVGGLPEKMGLKLVEPLRELFKDEVRALGRELGLPDSFIGRHPFPGPGLAIRCPGEITRDKLDILREADAIYIDQIRKHGLYDEIWQAFVAILPVRTVGVMGDGRTYDYACALRAVTSVDGMTADYYPFSHEFLGETATRIINEVKGINRCTYDITSKPPGTIEWE.

The Glutamine amidotransferase type-1 domain maps to 8 to 202 (RLLIIDFGSQ…FVRLAGFSGD (195 aa)). The active-site Nucleophile is Cys-86. Active-site residues include His-177 and Glu-179. One can recognise a GMPS ATP-PPase domain in the interval 203-395 (WTMGAYREQM…LGLPDSFIGR (193 aa)). 230–236 (SGGVDSS) contributes to the ATP binding site.

In terms of assembly, homodimer.

The catalysed reaction is XMP + L-glutamine + ATP + H2O = GMP + L-glutamate + AMP + diphosphate + 2 H(+). Its pathway is purine metabolism; GMP biosynthesis; GMP from XMP (L-Gln route): step 1/1. Catalyzes the synthesis of GMP from XMP. The chain is GMP synthase [glutamine-hydrolyzing] from Ruegeria sp. (strain TM1040) (Silicibacter sp.).